The following is a 43-amino-acid chain: Protein PsbN (43 aa).

The helical transmembrane segment at 4–24 (GILIVIFISCLLVSFTGYAVY) threads the bilayer.

This sequence belongs to the PsbN family.

The protein localises to the plastid. Its subcellular location is the chloroplast thylakoid membrane. Functionally, may play a role in photosystem I and II biogenesis. The polypeptide is Protein PsbN (Coleochaete orbicularis (Charophycean green alga)).